The following is a 135-amino-acid chain: Probable transcription factor At2g20613 (135 aa).

A disordered region spans residues 1–104; sequence MSHKRFNPLT…KRGGGGGEEA (104 aa). A compositionally biased stretch (acidic residues) spans 28–41; sequence DSSSDEETDSDSDS. A compositionally biased stretch (basic and acidic residues) spans 62–80; that stretch reads KSVKISEKSVAKRSRETHE.

Belongs to the GeBP family.

The chain is Probable transcription factor At2g20613 from Arabidopsis thaliana (Mouse-ear cress).